The following is a 757-amino-acid chain: Mitofusin-2 (757 aa).

At 1–604 the chain is on the cytoplasmic side; the sequence is MSLLFSRCNS…TQEELMVSMV (604 aa). The tract at residues 30 to 94 is part of a helix bundle domain, formed by helices from N-terminal and C-terminal regions; the sequence is KHFVTAKKKI…VRGISEVLAR (65 aa). The region spanning 93–342 is the Dynamin-type G domain; that stretch reads ARRHMKVAFF…VRMFEFQNFE (250 aa). The tract at residues 103-110 is G1 motif; the sequence is GRTSNGKS. 106 to 111 lines the GTP pocket; the sequence is SNGKST. At Thr111 the chain carries Phosphothreonine; by PINK1. A G2 motif region spans residues 129-130; sequence TT. The tract at residues 199–202 is G3 motif; the sequence is DSPG. 258–261 lines the GTP pocket; sequence NRWD. Residues 258–261 form a G4 motif region; it reads NRWD. Residue Glu288 is a region of interest, G5 motif. GTP contacts are provided by Ser305 and Lys307. The segment at 359–385 is part of a helix bundle domain, formed by helices from N-terminal and C-terminal regions; sequence EQHTVRAKQIAEAVRLIMDSLHIAAQE. Residues 406–435 are a coiled coil; sequence KQLELLAQDYKLRIKQMTEEVERQVSTAMA. Ser442 carries the phosphoserine; by PINK1 modification. The chain crosses the membrane as a helical span at residues 605–625; sequence TGLASLTSRTSMGILVVGGVV. Residue Trp626 is a topological domain, mitochondrial intermembrane. The helical transmembrane segment at 627 to 647 threads the bilayer; sequence KAVGWRLIALSFGLYGLLYVY. Residues 648–757 are Cytoplasmic-facing; sequence ERLTWTTRAK…FIHQYLQPSR (110 aa). Residues 696 to 738 are a coiled coil; it reads FAHLCQQVDITRDNLEQEIAAMNKKVEALDSLQSKAKLLRNKA. The part of a helix bundle domain, formed by helices from N-terminal and C-terminal regions stretch occupies residues 722-753; it reads EALDSLQSKAKLLRNKAGWLDSELNMFIHQYL.

It belongs to the TRAFAC class dynamin-like GTPase superfamily. Dynamin/Fzo/YdjA family. Mitofusin subfamily. As to quaternary structure, forms homomultimers and heteromultimers with MFN1. Oligomerization is essential for mitochondrion fusion. Interacts with VAT1. Interacts with STOML2; may form heterooligomers. Interacts (phosphorylated) with PRKN. Interacts with EIF2AK3. Interacts with THG1L; THG1L probably functions as a guanyl-nucleotide exchange factor/GEF, activating MFN2. Post-translationally, phosphorylated by PINK1. In terms of processing, ubiquitinated by non-degradative ubiquitin by PRKN, promoting mitochondrial fusion; deubiquitination by USP30 inhibits mitochondrial fusion. Ubiquitinated by HUWE1 when dietary stearate (C18:0) levels are low; ubiquitination inhibits mitochondrial fusion. Ubiquitous. In brain, it is more expressed than MFN1, while it is expressed at a weaker level than MFN1 in heart and testis. Expressed at high level in elongating spermatids of seminiferous tubules. Expression is markedly down-regulated in highly proliferative vascular smooth muscle cells (VSMCs) from the genetic hypertensive animal model SHR, as well as in balloon-injured Wistar Kyoto arteries.

The protein localises to the mitochondrion outer membrane. It catalyses the reaction GTP + H2O = GDP + phosphate + H(+). In terms of biological role, mitochondrial outer membrane GTPase that mediates mitochondrial clustering and fusion. Mitochondria are highly dynamic organelles, and their morphology is determined by the equilibrium between mitochondrial fusion and fission events. Overexpression induces the formation of mitochondrial networks. Membrane clustering requires GTPase activity and may involve a major rearrangement of the coiled coil domains. Plays a central role in mitochondrial metabolism and may be associated with obesity and/or apoptosis processes. Plays an important role in the regulation of vascular smooth muscle cell proliferation. Involved in the clearance of damaged mitochondria via selective autophagy (mitophagy). Is required for PRKN recruitment to dysfunctional mitochondria. Involved in the control of unfolded protein response (UPR) upon ER stress including activation of apoptosis and autophagy during ER stress. Acts as an upstream regulator of EIF2AK3 and suppresses EIF2AK3 activation under basal conditions. In Rattus norvegicus (Rat), this protein is Mitofusin-2 (Mfn2).